The sequence spans 166 residues: Zinc finger CCHC domain-containing protein 13 (166 aa).

A CCHC-type 1; degenerate zinc finger spans residues 4–21 (KDFFACGHSGHWARGCPR). The segment at 45-62 (YTCYCCGESGRNAKNCVL) adopts a CCHC-type 2; degenerate zinc-finger fold. 4 CCHC-type zinc fingers span residues 65–82 (NICY…DCKD), 89–106 (QHCY…DCDR), 110–127 (QKCY…DCAQ), and 128–145 (VKCY…NCSK).

The protein is Zinc finger CCHC domain-containing protein 13 (ZCCHC13) of Homo sapiens (Human).